The chain runs to 453 residues: Sialic acid-binding Ig-like lectin 6 (453 aa).

The first 26 residues, 1–26 (MQGAQEASASEMLPLLLPLLWAGALA), serve as a signal peptide directing secretion. The Extracellular portion of the chain corresponds to 27 to 347 (QERRFQLEGP…WKPEGRAGGV (321 aa)). An Ig-like V-type domain is found at 28–123 (ERRFQLEGPE…RDNAAYFFRL (96 aa)). 3 disulfide bridges follow: C46–C172, C51–C104, and C166–C215. A glycan (N-linked (GlcNAc...) asparagine) is linked at N103. Position 122 (R122) interacts with N-acetylneuraminate. In terms of domain architecture, Ig-like C2-type 1 spans 148–231 (PNISIPGTLE…AGVTMERTIQ (84 aa)). N-linked (GlcNAc...) asparagine glycans are attached at residues N149 and N163. The N-linked (GlcNAc...) asparagine glycan is linked to N233. Residues 238–333 (PQKVAISIFQ…PLGSLQISLS (96 aa)) enclose the Ig-like C2-type 2 domain. C274 and C319 are oxidised to a cystine. Residues 348-368 (LGAVWGASITTLVFLCVCFIF) traverse the membrane as a helical segment. Residues 369–453 (RVKTRRKKAA…TEYSEIKIHK (85 aa)) lie on the Cytoplasmic side of the membrane. An ITIM motif motif is present at residues 424 to 429 (LHYAVL). The short motif at 444 to 449 (TEYSEI) is the SLAM-like motif element.

This sequence belongs to the immunoglobulin superfamily. SIGLEC (sialic acid binding Ig-like lectin) family. As to quaternary structure, interacts with LEP. Expressed at high levels in placenta (cyto- and syncytiotrophoblastic cells) and at lower levels in spleen, peripheral blood leukocytes (predominantly B-cells) and small intestine.

The protein localises to the cell membrane. It localises to the secreted. Functionally, putative adhesion molecule that mediates sialic-acid dependent binding to cells. Binds to alpha-2,6-linked sialic acid. The sialic acid recognition site may be masked by cis interactions with sialic acids on the same cell surface. This Homo sapiens (Human) protein is Sialic acid-binding Ig-like lectin 6 (SIGLEC6).